A 126-amino-acid chain; its full sequence is Prefoldin subunit beta (126 aa).

It belongs to the prefoldin subunit beta family. Heterohexamer of two alpha and four beta subunits.

The protein resides in the cytoplasm. Functionally, molecular chaperone capable of stabilizing a range of proteins. Seems to fulfill an ATP-independent, HSP70-like function in archaeal de novo protein folding. This chain is Prefoldin subunit beta, found in Saccharolobus islandicus (strain Y.N.15.51 / Yellowstone #2) (Sulfolobus islandicus).